The sequence spans 254 residues: Fructose-1,6-bisphosphatase (254 aa).

Mg(2+) contacts are provided by E68, D84, L86, and D87. Substrate-binding positions include 87-89, R171, I176, and R195; that span reads DGS. Mg(2+) is bound at residue D202.

The protein belongs to the inositol monophosphatase superfamily. FBPase class 4 family. As to quaternary structure, homodimer. It depends on Mg(2+) as a cofactor.

It carries out the reaction beta-D-fructose 1,6-bisphosphate + H2O = beta-D-fructose 6-phosphate + phosphate. Its activity is regulated as follows. Inhibited by Li(+), ADP, ATP and glucose-6-phosphate. Its function is as follows. Catalyzes the conversion of D-fructose 1,6-bisphosphate to D-fructose 6-phosphate. In vitro, also has weak activity with inositol-1-phosphate, glucose-1-phosphate and glycerol-2-phosphate. In Pyrococcus furiosus (strain ATCC 43587 / DSM 3638 / JCM 8422 / Vc1), this protein is Fructose-1,6-bisphosphatase.